Here is a 263-residue protein sequence, read N- to C-terminus: Ribosomal RNA large subunit methyltransferase E (263 aa).

S-adenosyl-L-methionine contacts are provided by G50, W52, D68, N84, and D109. The active-site Proton acceptor is K149. In terms of domain architecture, TRAM spans 196–254 (PLRKGDKFVVDIEKLGSSGDGAVLIEGFVVFVKEVEVGEKVRIKITDVKPNFAFADVAE).

The protein belongs to the class I-like SAM-binding methyltransferase superfamily. RNA methyltransferase RlmE family.

The protein resides in the cytoplasm. The enzyme catalyses uridine(2552) in 23S rRNA + S-adenosyl-L-methionine = 2'-O-methyluridine(2552) in 23S rRNA + S-adenosyl-L-homocysteine + H(+). Functionally, specifically methylates the uridine in position 2552 of 23S rRNA at the 2'-O position of the ribose in the fully assembled 50S ribosomal subunit. This Methanosarcina barkeri (strain Fusaro / DSM 804) protein is Ribosomal RNA large subunit methyltransferase E.